The chain runs to 158 residues: Transcription elongation factor GreA (158 aa).

A coiled-coil region spans residues 45 to 72; that stretch reads AEYHAAREQQSFIEGRIKQLEGELSHAE.

Belongs to the GreA/GreB family.

Necessary for efficient RNA polymerase transcription elongation past template-encoded arresting sites. The arresting sites in DNA have the property of trapping a certain fraction of elongating RNA polymerases that pass through, resulting in locked ternary complexes. Cleavage of the nascent transcript by cleavage factors such as GreA or GreB allows the resumption of elongation from the new 3'terminus. GreA releases sequences of 2 to 3 nucleotides. The protein is Transcription elongation factor GreA of Xylella fastidiosa (strain M12).